The chain runs to 232 residues: Flagellar L-ring protein (232 aa).

A signal peptide spans 1 to 21 (MQKNAAHTYAISSLLVLSLTG). Cys22 carries the N-palmitoyl cysteine lipid modification. A lipid anchor (S-diacylglycerol cysteine) is attached at Cys22.

It belongs to the FlgH family. As to quaternary structure, the basal body constitutes a major portion of the flagellar organelle and consists of four rings (L,P,S, and M) mounted on a central rod.

It localises to the cell outer membrane. It is found in the bacterial flagellum basal body. Its function is as follows. Assembles around the rod to form the L-ring and probably protects the motor/basal body from shearing forces during rotation. The sequence is that of Flagellar L-ring protein from Shigella boydii serotype 4 (strain Sb227).